A 96-amino-acid chain; its full sequence is Small ribosomal subunit protein bS6 (96 aa).

The protein belongs to the bacterial ribosomal protein bS6 family.

Binds together with bS18 to 16S ribosomal RNA. This is Small ribosomal subunit protein bS6 from Gloeobacter violaceus (strain ATCC 29082 / PCC 7421).